Here is a 178-residue protein sequence, read N- to C-terminus: Female-specific protein transformer (178 aa).

Composition is skewed to basic and acidic residues over residues 1–18 (MKMD…DSHG) and 25–40 (RERE…DSKK). The tract at residues 1-117 (MKMDADSSCG…RRYNPPPKII (117 aa)) is disordered. Basic residues-rich tracts occupy residues 59-73 (RRLR…RRSA) and 81-108 (RRHR…RSPR).

The protein localises to the nucleus speckle. Functionally, member of the regulatory pathway controlling female somatic sexual differentiation, regulated by Sxl. Activates dsx female-specific splicing by promoting the formation of a splicing enhancer complex which consists of tra, tra2 and sr proteins. The protein is Female-specific protein transformer (tra) of Drosophila erecta (Fruit fly).